Consider the following 78-residue polypeptide: RNA-binding protein Hfq (78 aa).

The 60-residue stretch at 10 to 69 folds into the Sm domain; that stretch reads DPFLNTLRKEHVPVSIYLVNGIKLQGQIESFDQYVVLLRNTVTQMVYKHAISTVVPARAV.

The protein belongs to the Hfq family. In terms of assembly, homohexamer.

In terms of biological role, RNA chaperone that binds small regulatory RNA (sRNAs) and mRNAs to facilitate mRNA translational regulation in response to envelope stress, environmental stress and changes in metabolite concentrations. Also binds with high specificity to tRNAs. This is RNA-binding protein Hfq from Bordetella avium (strain 197N).